The sequence spans 233 residues: Ribonuclease 3 (233 aa).

Residues 4-126 form the RNase III domain; it reads LNKLMERLGH…IVGAIYIDAG (123 aa). E39 is a Mg(2+) binding site. D43 is a catalytic residue. Residues D112 and E115 each contribute to the Mg(2+) site. E115 is an active-site residue. The DRBM domain occupies 153-222; sequence DAKSLLQEWL…AKRFLELLDD (70 aa).

This sequence belongs to the ribonuclease III family. In terms of assembly, homodimer. The cofactor is Mg(2+).

The protein localises to the cytoplasm. The enzyme catalyses Endonucleolytic cleavage to 5'-phosphomonoester.. Digests double-stranded RNA. Involved in the processing of primary rRNA transcript to yield the immediate precursors to the large and small rRNAs (23S and 16S). Processes some mRNAs, and tRNAs when they are encoded in the rRNA operon. Processes pre-crRNA and tracrRNA of type II CRISPR loci if present in the organism. In Coxiella burnetii (strain Dugway 5J108-111), this protein is Ribonuclease 3.